Here is a 103-residue protein sequence, read N- to C-terminus: UPF0058 protein MJ1205 (103 aa).

The protein belongs to the UPF0058 family.

This is UPF0058 protein MJ1205 from Methanocaldococcus jannaschii (strain ATCC 43067 / DSM 2661 / JAL-1 / JCM 10045 / NBRC 100440) (Methanococcus jannaschii).